The following is a 282-amino-acid chain: Chorismate dehydratase (282 aa).

This sequence belongs to the MqnA/MqnD family. MqnA subfamily.

The catalysed reaction is chorismate = 3-[(1-carboxyvinyl)-oxy]benzoate + H2O. The protein operates within quinol/quinone metabolism; menaquinone biosynthesis. Functionally, catalyzes the dehydration of chorismate into 3-[(1-carboxyvinyl)oxy]benzoate, a step in the biosynthesis of menaquinone (MK, vitamin K2). This chain is Chorismate dehydratase, found in Streptomyces coelicolor (strain ATCC BAA-471 / A3(2) / M145).